Consider the following 237-residue polypeptide: ATP synthase subunit 4, mitochondrial (237 aa).

The N-terminal 30 residues, 1–30 (MFRALTLKASARPVVAGLCSRQAPIAAVRY), are a transit peptide targeting the mitochondrion.

Belongs to the eukaryotic ATPase B chain family.

Its subcellular location is the mitochondrion. The protein resides in the mitochondrion inner membrane. Mitochondrial membrane ATP synthase (F(1)F(0) ATP synthase or Complex V) produces ATP from ADP in the presence of a proton gradient across the membrane which is generated by electron transport complexes of the respiratory chain. F-type ATPases consist of two structural domains, F(1) - containing the extramembraneous catalytic core, and F(0) - containing the membrane proton channel, linked together by a central stalk and a peripheral stalk. During catalysis, ATP synthesis in the catalytic domain of F(1) is coupled via a rotary mechanism of the central stalk subunits to proton translocation. Part of the complex F(0) domain and the peripheric stalk, which acts as a stator to hold the catalytic alpha(3)beta(3) subcomplex and subunit a/ATP6 static relative to the rotary elements. The sequence is that of ATP synthase subunit 4, mitochondrial (ATP4) from Kluyveromyces lactis (strain ATCC 8585 / CBS 2359 / DSM 70799 / NBRC 1267 / NRRL Y-1140 / WM37) (Yeast).